The following is a 537-amino-acid chain: O-phosphoserine--tRNA(Cys) ligase (537 aa).

Substrate-binding positions include 186 to 188 (HMT), 231 to 233 (SAS), 273 to 274 (YY), and Asn-317.

Belongs to the class-II aminoacyl-tRNA synthetase family. O-phosphoseryl-tRNA(Cys) synthetase subfamily. Homotetramer. Interacts with SepCysS.

The catalysed reaction is tRNA(Cys) + O-phospho-L-serine + ATP = O-phospho-L-seryl-tRNA(Cys) + AMP + diphosphate. Its function is as follows. Catalyzes the attachment of O-phosphoserine (Sep) to tRNA(Cys). The polypeptide is O-phosphoserine--tRNA(Cys) ligase (Methanococcus maripaludis (strain C6 / ATCC BAA-1332)).